Reading from the N-terminus, the 191-residue chain is Pyridoxal 5'-phosphate synthase subunit PdxT (191 aa).

46-48 (GES) lines the L-glutamine pocket. Cys75 (nucleophile) is an active-site residue. Residues Arg101 and 129 to 130 (IR) each bind L-glutamine. Active-site charge relay system residues include His165 and Glu167.

This sequence belongs to the glutaminase PdxT/SNO family. As to quaternary structure, in the presence of PdxS, forms a dodecamer of heterodimers. Only shows activity in the heterodimer.

It carries out the reaction aldehydo-D-ribose 5-phosphate + D-glyceraldehyde 3-phosphate + L-glutamine = pyridoxal 5'-phosphate + L-glutamate + phosphate + 3 H2O + H(+). The enzyme catalyses L-glutamine + H2O = L-glutamate + NH4(+). It functions in the pathway cofactor biosynthesis; pyridoxal 5'-phosphate biosynthesis. Functionally, catalyzes the hydrolysis of glutamine to glutamate and ammonia as part of the biosynthesis of pyridoxal 5'-phosphate. The resulting ammonia molecule is channeled to the active site of PdxS. The polypeptide is Pyridoxal 5'-phosphate synthase subunit PdxT (Staphylococcus saprophyticus subsp. saprophyticus (strain ATCC 15305 / DSM 20229 / NCIMB 8711 / NCTC 7292 / S-41)).